We begin with the raw amino-acid sequence, 89 residues long: Large ribosomal subunit protein bL31B (89 aa).

Belongs to the bacterial ribosomal protein bL31 family. Type B subfamily. As to quaternary structure, part of the 50S ribosomal subunit.

This chain is Large ribosomal subunit protein bL31B, found in Enterococcus faecalis (strain ATCC 700802 / V583).